Reading from the N-terminus, the 434-residue chain is 3-phosphoshikimate 1-carboxyvinyltransferase (434 aa).

3-phosphoshikimate is bound by residues K22, S23, and R27. Position 22 (K22) interacts with phosphoenolpyruvate. Residues G93 and R121 each coordinate phosphoenolpyruvate. 6 residues coordinate 3-phosphoshikimate: S168, S169, Q170, S199, D320, and K347. Q170 is a binding site for phosphoenolpyruvate. Catalysis depends on D320, which acts as the Proton acceptor. Positions 351, 394, and 419 each coordinate phosphoenolpyruvate.

The protein belongs to the EPSP synthase family. In terms of assembly, monomer.

The protein resides in the cytoplasm. It catalyses the reaction 3-phosphoshikimate + phosphoenolpyruvate = 5-O-(1-carboxyvinyl)-3-phosphoshikimate + phosphate. It functions in the pathway metabolic intermediate biosynthesis; chorismate biosynthesis; chorismate from D-erythrose 4-phosphate and phosphoenolpyruvate: step 6/7. Functionally, catalyzes the transfer of the enolpyruvyl moiety of phosphoenolpyruvate (PEP) to the 5-hydroxyl of shikimate-3-phosphate (S3P) to produce enolpyruvyl shikimate-3-phosphate and inorganic phosphate. This Paraburkholderia phymatum (strain DSM 17167 / CIP 108236 / LMG 21445 / STM815) (Burkholderia phymatum) protein is 3-phosphoshikimate 1-carboxyvinyltransferase.